We begin with the raw amino-acid sequence, 902 residues long: Inter-alpha-trypsin inhibitor heavy chain H1 (902 aa).

The N-terminal stretch at 1–28 (MDGTMGLQGLLCLCLASHLALQAMPTQG) is a signal peptide. A VIT domain is found at 29-158 (SPTDSTKGNK…KATFQLTYEE (130 aa)). An S-linked (Hex...) cysteine glycan is attached at C52. N69 is a glycosylation site (N-linked (GlcNAc...) asparagine). S121 carries the post-translational modification Phosphoserine. N-linked (GlcNAc...) asparagine glycosylation is present at N277. Residues 282–442 (NKNVVFVIDI…WNFLEVRALE (161 aa)) form the VWFA domain. A phosphothreonine mark is found at T394 and T399. The segment covering 637–651 (SASQPSPTHPSSSIQ) has biased composition (polar residues). A disordered region spans residues 637–656 (SASQPSPTHPSSSIQKLPDR). The O-linked (GalNAc...) serine glycan is linked to S639. T644 carries an O-linked (GalNAc...) threonine glycan. The residue at position 663 (D663) is an Aspartate 1-(chondroitin 4-sulfate)-ester. Residues 664–902 (PHFIIRVPQK…HTDYIVPDIF (239 aa)) constitute a propeptide that is removed on maturation. An N-linked (GlcNAc...) asparagine glycan is attached at N741.

Belongs to the ITIH family. As to quaternary structure, I-alpha-I plasma protease inhibitors are assembled from one or two heavy chains (HC) and one light chain, bikunin. Inter-alpha-inhibitor (I-alpha-I) is composed of ITIH1/HC1, ITIH2/HC2 and bikunin. Interacts with TNFAIP6 (via Link and CUB domains). Post-translationally, heavy chains are linked to bikunin via chondroitin 4-sulfate esterified to the alpha-carboxyl of the C-terminal aspartate after propeptide cleavage. The S-linked glycan is composed of two 6-carbon sugars, possibly Glc or Gal.

The protein resides in the secreted. May act as a carrier of hyaluronan in serum or as a binding protein between hyaluronan and other matrix protein, including those on cell surfaces in tissues to regulate the localization, synthesis and degradation of hyaluronan which are essential to cells undergoing biological processes. In Sus scrofa (Pig), this protein is Inter-alpha-trypsin inhibitor heavy chain H1 (ITIH1).